Here is a 918-residue protein sequence, read N- to C-terminus: Hexokinase-1 (918 aa).

Methionine 1 is subject to N-acetylmethionine. The interval 1–10 (MIAAQLLAYY) is mitochondrial-binding peptide (MBP). Hexokinase domains follow at residues 16–458 (DDQV…MVTA) and 464–906 (AEQH…LITA). Residues arginine 30 and 84-89 (DLGGSS) contribute to the ATP site. Residues 73 to 207 (DGSEKGDFIA…DYDANIVAVV (135 aa)) form a hexokinase small subdomain 1 region. 84–91 (DLGGSSFR) is a binding site for D-glucose 6-phosphate. Residues serine 155, 172 to 173 (TK), and 208 to 209 (ND) each bind D-glucose. A hexokinase large subdomain 1 region spans residues 208–447 (NDTVGTMIDC…SDVRFLLSES (240 aa)). D-glucose 6-phosphate is bound by residues aspartate 209 and threonine 232. D-glucose is bound by residues asparagine 235, glutamate 260, and 291–294 (QRFE). A Phosphoserine modification is found at serine 337. 413-415 (DGS) contacts D-glucose 6-phosphate. ATP-binding positions include 425–426 (RR) and 532–537 (DLGGTN). Residues 521–655 (DGTEDGDFLA…EFDLDVVAVV (135 aa)) are hexokinase small subdomain 2. D-glucose 6-phosphate is bound at residue 532–536 (DLGGT). Residues 603 to 604 (SF), 620 to 621 (TK), and 656 to 657 (ND) contribute to the D-glucose site. The segment at 656–895 (NDTVGTMMTC…CNVSFLLSED (240 aa)) is hexokinase large subdomain 2. Residues aspartate 657 and threonine 680 each coordinate D-glucose 6-phosphate. Threonine 680 serves as a coordination point for ATP. D-glucose-binding positions include 682–683 (SN), glutamate 708, and glutamate 742. Residues 747 to 748 (GI), 784 to 788 (TKFLS), and 863 to 867 (TLYKL) each bind ATP. D-glucose 6-phosphate-binding positions include 861–863 (DGT) and serine 897.

It belongs to the hexokinase family. Monomer. Interacts with RABL2/RABL2A; binds preferentially to GTP-bound RABL2. Interacts with VDAC1. The HK1-VDAC1 complex interacts with ATF2. Interacts (via N-terminal spermatogenic cell-specific region) with PFKM (via C-terminus). Interacts with SMAD5.

It localises to the mitochondrion outer membrane. It is found in the cytoplasm. Its subcellular location is the cytosol. It catalyses the reaction a D-hexose + ATP = a D-hexose 6-phosphate + ADP + H(+). The catalysed reaction is D-fructose + ATP = D-fructose 6-phosphate + ADP + H(+). It carries out the reaction D-glucose + ATP = D-glucose 6-phosphate + ADP + H(+). The enzyme catalyses D-mannose + ATP = D-mannose 6-phosphate + ADP + H(+). It catalyses the reaction D-glucosamine + ATP = D-glucosamine 6-phosphate + ADP + H(+). It functions in the pathway carbohydrate metabolism; hexose metabolism. It participates in carbohydrate degradation; glycolysis; D-glyceraldehyde 3-phosphate and glycerone phosphate from D-glucose: step 1/4. With respect to regulation, hexokinase is an allosteric enzyme inhibited by its product D-glucose 6-phosphate. Hexokinase activity is inhibited by N-acetyl-D-glucosamine. Its function is as follows. Catalyzes the phosphorylation of various hexoses, such as D-glucose, D-glucosamine, D-fructose, D-mannose and 2-deoxy-D-glucose, to hexose 6-phosphate (D-glucose 6-phosphate, D-glucosamine 6-phosphate, D-fructose 6-phosphate, D-mannose 6-phosphate and 2-deoxy-D-glucose 6-phosphate, respectively). Does not phosphorylate N-acetyl-D-glucosamine. Mediates the initial step of glycolysis by catalyzing phosphorylation of D-glucose to D-glucose 6-phosphate. Involved in innate immunity and inflammation by acting as a pattern recognition receptor for bacterial peptidoglycan. When released in the cytosol, N-acetyl-D-glucosamine component of bacterial peptidoglycan inhibits the hexokinase activity of HK1 and causes its dissociation from mitochondrial outer membrane, thereby activating the NLRP3 inflammasome. The polypeptide is Hexokinase-1 (Bos taurus (Bovine)).